We begin with the raw amino-acid sequence, 337 residues long: Ribosomal RNA small subunit methyltransferase H (337 aa).

S-adenosyl-L-methionine contacts are provided by residues G35–Y37, D54, F81, D102, and Q109. The tract at residues P286–P316 is disordered. The span at P289–A300 shows a compositional bias: low complexity.

The protein belongs to the methyltransferase superfamily. RsmH family.

It localises to the cytoplasm. It catalyses the reaction cytidine(1402) in 16S rRNA + S-adenosyl-L-methionine = N(4)-methylcytidine(1402) in 16S rRNA + S-adenosyl-L-homocysteine + H(+). Specifically methylates the N4 position of cytidine in position 1402 (C1402) of 16S rRNA. This Methylobacterium sp. (strain 4-46) protein is Ribosomal RNA small subunit methyltransferase H.